A 503-amino-acid chain; its full sequence is Maturase K (503 aa).

Belongs to the intron maturase 2 family. MatK subfamily.

It localises to the plastid. The protein resides in the chloroplast. In terms of biological role, usually encoded in the trnK tRNA gene intron. Probably assists in splicing its own and other chloroplast group II introns. The polypeptide is Maturase K (Eucalyptus globulus subsp. globulus (Tasmanian blue gum)).